We begin with the raw amino-acid sequence, 259 residues long: Small ribosomal subunit protein mS23 (259 aa).

The span at 230–244 (RAASFTGSALPSSEE) shows a compositional bias: polar residues. A disordered region spans residues 230–259 (RAASFTGSALPSSEESAPVDEETEKVPQQV).

This sequence belongs to the mitochondrion-specific ribosomal protein mS23 family. Component of the mitochondrial small ribosomal subunit.

It localises to the mitochondrion. This chain is Small ribosomal subunit protein mS23 (rsm25), found in Aspergillus terreus (strain NIH 2624 / FGSC A1156).